Reading from the N-terminus, the 339-residue chain is Methionyl-tRNA formyltransferase (339 aa).

Position 110–113 (110–113 (SLLP)) interacts with (6S)-5,6,7,8-tetrahydrofolate.

This sequence belongs to the Fmt family.

It carries out the reaction L-methionyl-tRNA(fMet) + (6R)-10-formyltetrahydrofolate = N-formyl-L-methionyl-tRNA(fMet) + (6S)-5,6,7,8-tetrahydrofolate + H(+). Attaches a formyl group to the free amino group of methionyl-tRNA(fMet). The formyl group appears to play a dual role in the initiator identity of N-formylmethionyl-tRNA by promoting its recognition by IF2 and preventing the misappropriation of this tRNA by the elongation apparatus. This Prochlorococcus marinus (strain MIT 9211) protein is Methionyl-tRNA formyltransferase.